The primary structure comprises 245 residues: DNA repair protein RecO (245 aa).

The protein belongs to the RecO family.

In terms of biological role, involved in DNA repair and RecF pathway recombination. In Klebsiella pneumoniae (strain 342), this protein is DNA repair protein RecO.